We begin with the raw amino-acid sequence, 984 residues long: Ephrin type-B receptor 1 (984 aa).

The N-terminal stretch at 1 to 17 is a signal peptide; sequence MALDYLLLLLLASAVAA. The Extracellular segment spans residues 18–540; the sequence is MEETLMDTRT…YKSELREQLP (523 aa). An Eph LBD domain is found at 19 to 201; the sequence is EETLMDTRTA…FFKKCPSIVQ (183 aa). 2 consecutive Fibronectin type-III domains span residues 322 to 432 and 433 to 528; these read VPSG…TNQA and APST…TLTD. N-linked (GlcNAc...) asparagine glycosylation is found at Asn-334, Asn-426, and Asn-480. Residues 541–563 traverse the membrane as a helical segment; it reads LIAGSAAAGVVFVVSLVAISIVC. Topologically, residues 564–984 are cytoplasmic; sequence SRKRAYSKEA…QISQSPTAMA (421 aa). Tyr-600 is modified (phosphotyrosine). The 264-residue stretch at 619-882 folds into the Protein kinase domain; sequence VKIEEVIGAG…EIVNTLDKMI (264 aa). Residues 625–633 and Lys-651 contribute to the ATP site; that span reads IGAGEFGEV. The active-site Proton acceptor is Asp-744. One can recognise an SAM domain in the interval 911–975; that stretch reads TAFTTVDDWL…LNSIHSMRVQ (65 aa). At Tyr-928 the chain carries Phosphotyrosine; by autocatalysis. The PDZ-binding signature appears at 982 to 984; it reads AMA.

Belongs to the protein kinase superfamily. Tyr protein kinase family. Ephrin receptor subfamily. In terms of assembly, heterotetramer upon binding of the ligand. The heterotetramer is composed of an ephrin dimer and a receptor dimer. Oligomerization is probably required to induce biological responses. Interacts with EPHB6; transphosphorylates EPHB6 to form an active signaling complex. Interacts with PICK1. Interacts (through Tyr-594) with NCK1 (via SH2 domain); activates the JUN cascade to regulate cell adhesion. The ligand-activated form interacts (through Tyr-928) with GRB7 and GRB10 (via SH2 domains). The ligand-activated form interacts (residues within the catalytic domain) with GRB2 (via SH2 domain). Interacts with GRB2, SHC1 and SRC; activates the MAPK/ERK cascade to regulate cell migration. Interacts with CBL; regulates receptor degradation through ubiquitination. Interacts with ACP1. In terms of processing, phosphorylated. Autophosphorylation is stimulated by the ligand EFNB1. Required for interaction with SH2 domain-containing interactors, for activation of the MAPK/ERK and JUN signaling cascades and for ubiquitination by CBL. Post-translationally, ubiquitinated; (EFNB1)ligand-induced poly- and/or multi-ubiquitination by CBL is regulated by SRC and leads to lysosomal degradation. In terms of tissue distribution, preferentially expressed in brain.

It is found in the cell membrane. The protein resides in the early endosome membrane. The protein localises to the cell projection. It localises to the dendrite. It catalyses the reaction L-tyrosyl-[protein] + ATP = O-phospho-L-tyrosyl-[protein] + ADP + H(+). Receptor tyrosine kinase which binds promiscuously transmembrane ephrin-B family ligands residing on adjacent cells, leading to contact-dependent bidirectional signaling into neighboring cells. The signaling pathway downstream of the receptor is referred to as forward signaling while the signaling pathway downstream of the ephrin ligand is referred to as reverse signaling. Cognate/functional ephrin ligands for this receptor include EFNB1, EFNB2 and EFNB3. During nervous system development, regulates retinal axon guidance redirecting ipsilaterally ventrotemporal retinal ganglion cells axons at the optic chiasm midline. This probably requires repulsive interaction with EFNB2. In the adult nervous system together with EFNB3, regulates chemotaxis, proliferation and polarity of the hippocampus neural progenitors. In addition to its role in axon guidance also plays an important redundant role with other ephrin-B receptors in development and maturation of dendritic spines and synapse formation. May also regulate angiogenesis. More generally, may play a role in targeted cell migration and adhesion. Upon activation by EFNB1 and probably other ephrin-B ligands activates the MAPK/ERK and the JNK signaling cascades to regulate cell migration and adhesion respectively. Involved in the maintenance of the pool of satellite cells (muscle stem cells) by promoting their self-renewal and reducing their activation and differentiation. This is Ephrin type-B receptor 1 (EPHB1) from Homo sapiens (Human).